A 275-amino-acid polypeptide reads, in one-letter code: MALQQEIIQALGVKPQIDAHEEIRRSVDFLKSYLKTYPFLKTLVLGISGGQDSTLAGKLSQLAISELRDETGDQSYQFIAVRLPFGVQFDEKDCQDALAFIQPDKVLTVNIKEAVLASEKALREAGIELSDFVRGNEKARERMKAQYSIAGMTKGVVVGTDHAAEAVTGFFTKYGDGGTDINPLFRLNKRQGKLLLKTLGCPEHLYLKVPTADLEDDRPSLPDEVALGVTYDNIDDYLEGKQIDEKISQIIDGWYVKTEHKRRPPITIFDDFWKQ.

ATP is bound at residue 46-53 (GISGGQDS). Aspartate 52 serves as a coordination point for Mg(2+). Deamido-NAD(+) is bound at residue arginine 140. ATP is bound at residue threonine 160. Residue glutamate 165 participates in Mg(2+) binding. Lysine 173 and aspartate 180 together coordinate deamido-NAD(+). Residues lysine 189 and threonine 211 each coordinate ATP. 260–261 (HK) is a deamido-NAD(+) binding site.

This sequence belongs to the NAD synthetase family. As to quaternary structure, homodimer.

The catalysed reaction is deamido-NAD(+) + NH4(+) + ATP = AMP + diphosphate + NAD(+) + H(+). The protein operates within cofactor biosynthesis; NAD(+) biosynthesis; NAD(+) from deamido-NAD(+) (ammonia route): step 1/1. Functionally, catalyzes the ATP-dependent amidation of deamido-NAD to form NAD. Uses ammonia as a nitrogen source. The polypeptide is NH(3)-dependent NAD(+) synthetase (Cronobacter sakazakii (strain ATCC BAA-894) (Enterobacter sakazakii)).